The following is a 480-amino-acid chain: MILKLYNTRTKDFSELANFSDVKVYACGPTVYNYAHIGNFRTYIFGDLLIKTLRFLGYKVNYAMNITDIGHLTGDLDDGEDKVAKTAREKGLTVYEISKFFTEAFFKDCKKLNVVYPDKVLIASKHIPNMIEVIKILEEKKFTYFSNGNVYFDTSCFKSYGEMAGIDLIDKDMAFSRVDIDKFKRNKTDFVLWFTNSKFKDQEMKWDSPWGFGYPSWHLECAAMNLEYFKDTLDIHLGGVDHIGVHHINEIAIVECFLNKKWCDIFVHGEFLIMDYNKMSKSHGNFITVKGLEEQNFSPLDFRYLCLTSHYRNQLKFSFNNLKASKIARENMINRLSYFYASLDPADLNMLNKDLKNFGFSIEKEYYDSFVEKVSFDLNVSKGLALLWEVIKSENLGFVSKLKLAFIFDEIISLNLREEILKKSENHNIVIDENMKILLEERRIAKCEKNFKRADEIRDFFAKKGFVLIDTKEGTKVKRG.

Cys-27 lines the Zn(2+) pocket. The short motif at 29 to 39 (PTVYNYAHIGN) is the 'HIGH' region element. Residues Cys-221, His-246, and Glu-250 each contribute to the Zn(2+) site. Positions 278 to 282 (KMSKS) match the 'KMSKS' region motif. Residue Lys-281 participates in ATP binding.

It belongs to the class-I aminoacyl-tRNA synthetase family. Monomer. It depends on Zn(2+) as a cofactor.

Its subcellular location is the cytoplasm. It carries out the reaction tRNA(Cys) + L-cysteine + ATP = L-cysteinyl-tRNA(Cys) + AMP + diphosphate. The chain is Cysteine--tRNA ligase from Borrelia garinii subsp. bavariensis (strain ATCC BAA-2496 / DSM 23469 / PBi) (Borreliella bavariensis).